We begin with the raw amino-acid sequence, 177 residues long: RNA pyrophosphohydrolase (177 aa).

One can recognise a Nudix hydrolase domain in the interval 6-149 (GYRPNVGIVI…KRDVYRRVMK (144 aa)). Residues 38–59 (GGINPGESAEQAMYRELFEEVG) carry the Nudix box motif.

It belongs to the Nudix hydrolase family. RppH subfamily. The cofactor is a divalent metal cation.

In terms of biological role, accelerates the degradation of transcripts by removing pyrophosphate from the 5'-end of triphosphorylated RNA, leading to a more labile monophosphorylated state that can stimulate subsequent ribonuclease cleavage. This Pectobacterium carotovorum subsp. carotovorum (strain PC1) protein is RNA pyrophosphohydrolase.